The chain runs to 122 residues: Large ribosomal subunit protein eL18 (122 aa).

It belongs to the eukaryotic ribosomal protein eL18 family.

The polypeptide is Large ribosomal subunit protein eL18 (Thermoplasma volcanium (strain ATCC 51530 / DSM 4299 / JCM 9571 / NBRC 15438 / GSS1)).